We begin with the raw amino-acid sequence, 151 residues long: 18 kDa heat shock protein (151 aa).

One can recognise a sHSP domain in the interval 38-151 (TFNGNAGFKV…KDNGRRIDIH (114 aa)).

Belongs to the small heat shock protein (HSP20) family.

In terms of biological role, probable chaperone. The chain is 18 kDa heat shock protein (hsp18) from Clostridium acetobutylicum (strain ATCC 824 / DSM 792 / JCM 1419 / IAM 19013 / LMG 5710 / NBRC 13948 / NRRL B-527 / VKM B-1787 / 2291 / W).